The sequence spans 305 residues: tRNA uridine(34) hydroxylase (305 aa).

A Rhodanese domain is found at 130 to 228 (DDPDTLVIDT…YLGEIPEQES (99 aa)). The Cysteine persulfide intermediate role is filled by C188.

Belongs to the TrhO family.

The catalysed reaction is uridine(34) in tRNA + AH2 + O2 = 5-hydroxyuridine(34) in tRNA + A + H2O. Its function is as follows. Catalyzes oxygen-dependent 5-hydroxyuridine (ho5U) modification at position 34 in tRNAs. This chain is tRNA uridine(34) hydroxylase, found in Synechococcus sp. (strain CC9902).